A 220-amino-acid chain; its full sequence is Uracil-DNA glycosylase 1 (220 aa).

Asp-65 functions as the Proton acceptor in the catalytic mechanism.

This sequence belongs to the uracil-DNA glycosylase (UDG) superfamily. UNG family.

The protein resides in the cytoplasm. It catalyses the reaction Hydrolyzes single-stranded DNA or mismatched double-stranded DNA and polynucleotides, releasing free uracil.. Functionally, excises uracil residues from the DNA which can arise as a result of misincorporation of dUMP residues by DNA polymerase or due to deamination of cytosine. The polypeptide is Uracil-DNA glycosylase 1 (Bacteroides fragilis (strain YCH46)).